The primary structure comprises 449 residues: Na(+)-translocating NADH-quinone reductase subunit A (449 aa).

This sequence belongs to the NqrA family. As to quaternary structure, composed of six subunits; NqrA, NqrB, NqrC, NqrD, NqrE and NqrF.

The enzyme catalyses a ubiquinone + n Na(+)(in) + NADH + H(+) = a ubiquinol + n Na(+)(out) + NAD(+). Its function is as follows. NQR complex catalyzes the reduction of ubiquinone-1 to ubiquinol by two successive reactions, coupled with the transport of Na(+) ions from the cytoplasm to the periplasm. NqrA to NqrE are probably involved in the second step, the conversion of ubisemiquinone to ubiquinol. In Actinobacillus pleuropneumoniae serotype 3 (strain JL03), this protein is Na(+)-translocating NADH-quinone reductase subunit A.